The following is a 758-amino-acid chain: Polyribonucleotide nucleotidyltransferase (758 aa).

2 residues coordinate Mg(2+): Asp-488 and Asp-494. One can recognise a KH domain in the interval Pro-555–Ile-614. The region spanning Gly-624–Arg-692 is the S1 motif domain. The segment at Arg-692–Ala-758 is disordered. The segment covering Pro-707–Ala-735 has biased composition (basic and acidic residues). The span at Gly-736–Gln-745 shows a compositional bias: low complexity.

Belongs to the polyribonucleotide nucleotidyltransferase family. Requires Mg(2+) as cofactor.

It is found in the cytoplasm. It catalyses the reaction RNA(n+1) + phosphate = RNA(n) + a ribonucleoside 5'-diphosphate. Its function is as follows. Involved in mRNA degradation. Catalyzes the phosphorolysis of single-stranded polyribonucleotides processively in the 3'- to 5'-direction. In Paracidovorax citrulli (strain AAC00-1) (Acidovorax citrulli), this protein is Polyribonucleotide nucleotidyltransferase.